A 173-amino-acid chain; its full sequence is ATP-dependent protease subunit HslV (173 aa).

The active site involves Thr-2. Na(+) is bound by residues Gly-158, Asp-161, and Thr-164.

This sequence belongs to the peptidase T1B family. HslV subfamily. In terms of assembly, a double ring-shaped homohexamer of HslV is capped on each side by a ring-shaped HslU homohexamer. The assembly of the HslU/HslV complex is dependent on binding of ATP.

It is found in the cytoplasm. The catalysed reaction is ATP-dependent cleavage of peptide bonds with broad specificity.. With respect to regulation, allosterically activated by HslU binding. Functionally, protease subunit of a proteasome-like degradation complex believed to be a general protein degrading machinery. The polypeptide is ATP-dependent protease subunit HslV (Mannheimia succiniciproducens (strain KCTC 0769BP / MBEL55E)).